Here is a 208-residue protein sequence, read N- to C-terminus: Imidazole glycerol phosphate synthase subunit HisH (208 aa).

Positions 1–206 (MIVIIDYDTG…KEVTESCKSS (206 aa)) constitute a Glutamine amidotransferase type-1 domain. Residue cysteine 79 is the Nucleophile of the active site. Active-site residues include histidine 181 and glutamate 183.

As to quaternary structure, heterodimer of HisH and HisF.

Its subcellular location is the cytoplasm. The catalysed reaction is 5-[(5-phospho-1-deoxy-D-ribulos-1-ylimino)methylamino]-1-(5-phospho-beta-D-ribosyl)imidazole-4-carboxamide + L-glutamine = D-erythro-1-(imidazol-4-yl)glycerol 3-phosphate + 5-amino-1-(5-phospho-beta-D-ribosyl)imidazole-4-carboxamide + L-glutamate + H(+). It carries out the reaction L-glutamine + H2O = L-glutamate + NH4(+). The protein operates within amino-acid biosynthesis; L-histidine biosynthesis; L-histidine from 5-phospho-alpha-D-ribose 1-diphosphate: step 5/9. Its function is as follows. IGPS catalyzes the conversion of PRFAR and glutamine to IGP, AICAR and glutamate. The HisH subunit catalyzes the hydrolysis of glutamine to glutamate and ammonia as part of the synthesis of IGP and AICAR. The resulting ammonia molecule is channeled to the active site of HisF. The sequence is that of Imidazole glycerol phosphate synthase subunit HisH from Listeria innocua serovar 6a (strain ATCC BAA-680 / CLIP 11262).